The primary structure comprises 383 residues: Ovalbumin (383 aa).

Residue G2 is modified to N-acetylglycine. The not cleaved signal peptide spans 22-48 (HHANDNMLYSPFAILSTLAMVFLGAKD). S69 is subject to Phosphoserine. Residues C74 and C121 are joined by a disulfide bond. N-linked (GlcNAc...) asparagine glycosylation is found at N293 and N312. S345 carries the post-translational modification Phosphoserine.

Belongs to the serpin family. Ov-serpin subfamily. The signal sequence is not cleaved. The functional signal for membrane translocation of ovalbumin becomes accessible when the nascent chain is 50 to 60 residues long. The hydrophobic sequence which lies between residues 27 and 43 folds back on the preceding residues to form an amphipathic hairpin structure which is the signal element recognized by the membrane. Major protein of egg white.

The protein resides in the secreted. In terms of biological role, storage protein of egg white. Lack protease inhibitory activity. This chain is Ovalbumin (SERPINB14), found in Coturnix japonica (Japanese quail).